Here is a 185-residue protein sequence, read N- to C-terminus: Elongation factor P (185 aa).

This sequence belongs to the elongation factor P family.

The protein localises to the cytoplasm. The protein operates within protein biosynthesis; polypeptide chain elongation. Functionally, involved in peptide bond synthesis. Stimulates efficient translation and peptide-bond synthesis on native or reconstituted 70S ribosomes in vitro. Probably functions indirectly by altering the affinity of the ribosome for aminoacyl-tRNA, thus increasing their reactivity as acceptors for peptidyl transferase. The sequence is that of Elongation factor P from Brevibacillus brevis (strain 47 / JCM 6285 / NBRC 100599).